A 377-amino-acid polypeptide reads, in one-letter code: Transcription initiation factor IIA subunit 1 (377 aa).

Alanine 2 carries the N-acetylalanine modification. Low complexity-rich tracts occupy residues 69–79 (QVQQQHQPQQQ), 89–105 (QAQP…TQQV), and 248–280 (QAQI…TGDT). 2 disordered regions span residues 69–107 (QVQQ…QVLI) and 248–330 (QAQI…QELF). Phosphoserine; by TAF1 occurs at positions 281 and 282. A compositionally biased stretch (acidic residues) spans 281–330 (SSEEDEDEEEDYDDDEEEDKEKDGAEDGQVEEEPLNSEDDVSDEEGQELF). Phosphoserine is present on residues serine 317 and serine 322. Residues histidine 344 and arginine 345 each contribute to the DNA site.

Belongs to the TFIIA subunit 1 family. As to quaternary structure, TFIIA is a heterodimer of the large unprocessed subunit 1 and a small subunit gamma. It was originally believed to be a heterotrimer of an alpha (p35), a beta (p19) and a gamma subunit (p12). TFIIA forms a complex with TBP. Part of TBP-based Pol II pre-initiation complex (PIC), in which Pol II core assembles with general transcription factors and other specific initiation factors including GTF2E1, GTF2E2, GTF2F1, GTF2F2, TCEA1, ERCC2, ERCC3, GTF2H2, GTF2H3, GTF2H4, GTF2H5, GTF2A1, GTF2A2, GTF2B and TBP; this large multi-subunit PIC complex mediates DNA unwinding and targets Pol II core to the transcription start site where the first phosphodiester bond forms. The alpha and beta subunits are postranslationally produced from the precursor formby TASP1. The cleavage promotes proteasomal degradation.

Its subcellular location is the nucleus. In terms of biological role, TFIIA is a component of the transcription machinery of RNA polymerase II and plays an important role in transcriptional activation. TFIIA in a complex with TBP mediates transcriptional activity. The protein is Transcription initiation factor IIA subunit 1 (Gtf2a1) of Rattus norvegicus (Rat).